A 181-amino-acid polypeptide reads, in one-letter code: Gastrokine-3 (181 aa).

An N-terminal signal peptide occupies residues 1-20 (MKHLVASSILGVFVLTPSLA). Residues 53 to 145 (NNIFSEWDGI…MCRDDPTYFA (93 aa)) enclose the BRICHOS domain. A disulfide bond links C80 and C137.

Belongs to the gastrokine family.

The protein localises to the secreted. Functionally, may inhibit gastric epithelial cell proliferation. The chain is Gastrokine-3 (GKN3P) from Homo sapiens (Human).